Consider the following 156-residue polypeptide: 6,7-dimethyl-8-ribityllumazine synthase (156 aa).

Residues tryptophan 28, 60–62 (SFE), and 82–84 (VVV) contribute to the 5-amino-6-(D-ribitylamino)uracil site. 87 to 88 (GT) is a (2S)-2-hydroxy-3-oxobutyl phosphate binding site. The active-site Proton donor is the histidine 90. Phenylalanine 115 is a 5-amino-6-(D-ribitylamino)uracil binding site. Position 129 (arginine 129) interacts with (2S)-2-hydroxy-3-oxobutyl phosphate.

The protein belongs to the DMRL synthase family.

The catalysed reaction is (2S)-2-hydroxy-3-oxobutyl phosphate + 5-amino-6-(D-ribitylamino)uracil = 6,7-dimethyl-8-(1-D-ribityl)lumazine + phosphate + 2 H2O + H(+). It functions in the pathway cofactor biosynthesis; riboflavin biosynthesis; riboflavin from 2-hydroxy-3-oxobutyl phosphate and 5-amino-6-(D-ribitylamino)uracil: step 1/2. In terms of biological role, catalyzes the formation of 6,7-dimethyl-8-ribityllumazine by condensation of 5-amino-6-(D-ribitylamino)uracil with 3,4-dihydroxy-2-butanone 4-phosphate. This is the penultimate step in the biosynthesis of riboflavin. The chain is 6,7-dimethyl-8-ribityllumazine synthase from Kocuria rhizophila (strain ATCC 9341 / DSM 348 / NBRC 103217 / DC2201).